Reading from the N-terminus, the 1308-residue chain is Receptor tyrosine-protein kinase erbB-4 (1308 aa).

The signal sequence occupies residues 1-25 (MKPATGLWVWVSLLVAAGTVQPSDS). Residues 26-651 (QSVCAGTENK…STLPQHARTP (626 aa)) are Extracellular-facing. A disulfide bond links Cys29 and Cys56. N-linked (GlcNAc...) asparagine glycosylation is found at Asn138, Asn174, and Asn181. 12 cysteine pairs are disulfide-bonded: Cys156/Cys186, Cys189/Cys197, Cys193/Cys205, Cys213/Cys221, Cys217/Cys229, Cys230/Cys238, Cys234/Cys246, Cys249/Cys258, Cys262/Cys289, Cys293/Cys304, Cys308/Cys323, and Cys326/Cys330. N-linked (GlcNAc...) asparagine glycosylation is present at Asn253. N-linked (GlcNAc...) asparagine glycosylation is found at Asn358, Asn410, Asn473, and Asn495. Cystine bridges form between Cys503–Cys512, Cys507–Cys520, Cys523–Cys532, Cys536–Cys552, Cys555–Cys569, Cys559–Cys577, Cys580–Cys589, Cys593–Cys614, Cys617–Cys625, and Cys621–Cys633. Asn548 carries an N-linked (GlcNAc...) asparagine glycan. A glycan (N-linked (GlcNAc...) asparagine) is linked at Asn576. An N-linked (GlcNAc...) asparagine glycan is attached at Asn620. Residues 652 to 675 (LIAAGVIGGLFILVIVGLTFAVYV) traverse the membrane as a helical segment. The short motif at 676 to 684 (RRKSIKKKR) is the Nuclear localization signal element. The Cytoplasmic segment spans residues 676-1308 (RRKSIKKKRA…PPYRHRNTVV (633 aa)). The Protein kinase domain occupies 718–985 (LKRVKVLGSG…RMARDPQRYL (268 aa)). Residues 724-732 (LGSGAFGTV), Lys751, 797-799 (QLM), and 843-848 (DLAARN) contribute to the ATP site. Catalysis depends on Asp843, which acts as the Proton acceptor. Phosphotyrosine; by autocatalysis is present on residues Tyr875, Tyr1035, Tyr1056, Tyr1150, Tyr1162, Tyr1188, Tyr1202, Tyr1242, Tyr1258, and Tyr1284. 2 short sequence motifs (PPxY motif) span residues 1032 to 1035 (PPIY) and 1053 to 1056 (PPAY). A disordered region spans residues 1117–1150 (PHVQEDSSTQRYSADPTVFAPERSPRGELDEEGY). A PPxY motif 3 motif is present at residues 1298 to 1301 (PPPY). Positions 1306–1308 (TVV) match the PDZ-binding motif.

Belongs to the protein kinase superfamily. Tyr protein kinase family. EGF receptor subfamily. In terms of assembly, monomer in the absence of bound ligand. Homodimer or heterodimer with another ERBB family member upon ligand binding, thus forming heterotetramers. Interacts with EGFR and ERBB2. Interacts with CBFA2T3. Interacts with DLG2 (via its PDZ domain), DLG3 (via its PDZ domain), DLG4 (via its PDZ domain) and SNTB2 (via its PDZ domain). Interacts with MUC1. Interacts (via its PPxy motifs) with WWOX. Interacts (via the PPxY motif 3 of isoform JM-A CYT-2) with YAP1 (via the WW domain 1 of isoform 1). Interacts (isoform JM-A CYT-1 and isoform JM-B CYT-1) with WWP1. Interacts (via its intracellular domain) with TRIM28. Interacts (via the intracellular domains of both CYT-1 and CYT-2 isoforms) with KAP1; the interaction does not phosphorylate KAP1 but represses ERBB4-mediated transcriptional activity. Interacts with PRPU, DDX23, MATR3, RBM15, ILF3, KAP1, U5S1, U2SURP, ITCH, HNRNPU, AP2A1, NULC, LEO1, WWP2, IGHG1, HXK1, GRB7 and SRRT. Interacts (phosphorylated isoform JM-A CYT-1 and isoform JM-B CYT-1) with PIK3R1. Interacts with SHC1. Interacts with GRB2. Interacts (soluble intracellular domain) with STAT5A. Interacts (soluble intracellular domain) with BCL2. Interacts (phosphorylated) with STAT1. In terms of processing, isoform JM-A CYT-1 and isoform JM-A CYT-2 are processed by ADAM17. Proteolytic processing in response to ligand or 12-O-tetradecanoylphorbol-13-acetate stimulation results in the production of 120 kDa soluble receptor forms and intermediate membrane-anchored 80 kDa fragments (m80HER4), which are further processed by a presenilin-dependent gamma-secretase to release a cytoplasmic intracellular domain (E4ICD; E4ICD1/s80Cyt1 or E4ICD2/s80Cyt2, depending on the isoform). Membrane-anchored 80 kDa fragments of the processed isoform JM-A CYT-1 are more readily degraded by the proteasome than fragments of isoform JM-A CYT-2, suggesting a prevalence of E4ICD2 over E4ICD1. Isoform JM-B CYT-1 and isoform JM-B CYT-2 lack the ADAM17 cleavage site and are not processed by ADAM17, precluding further processing by gamma-secretase. Post-translationally, autophosphorylated on tyrosine residues in response to ligand binding. Autophosphorylation occurs in trans, i.e. one subunit of the dimeric receptor phosphorylates tyrosine residues on the other subunit. Ligands trigger phosphorylation at specific tyrosine residues, thereby creating binding sites for scaffold proteins and effectors. Constitutively phosphorylated at a basal level when overexpressed in heterologous systems; ligand binding leads to increased phosphorylation. Phosphorylation at Tyr-1035 is important for interaction with STAT1. Phosphorylation at Tyr-1056 is important for interaction with PIK3R1. Phosphorylation at Tyr-1242 is important for interaction with SHC1. Phosphorylation at Tyr-1188 may also contribute to the interaction with SHC1. Isoform JM-A CYT-2 is constitutively phosphorylated on tyrosine residues in a ligand-independent manner. E4ICD2 but not E4ICD1 is phosphorylated on tyrosine residues. Ubiquitinated. During mitosis, the ERBB4 intracellular domain is ubiquitinated by the APC/C complex and targeted to proteasomal degradation. Isoform JM-A CYT-1 and isoform JM-B CYT-1 are ubiquitinated by WWP1. The ERBB4 intracellular domain (E4ICD1) is ubiquitinated, and this involves NEDD4. Expressed at highest levels in brain, heart, kidney, in addition to skeletal muscle, parathyroid, cerebellum, pituitary, spleen, testis and breast. Lower levels in thymus, lung, salivary gland, and pancreas. Isoform JM-A CYT-1 and isoform JM-B CYT-1 are expressed in cerebellum, but only the isoform JM-B is expressed in the heart.

It localises to the cell membrane. It is found in the nucleus. The protein localises to the mitochondrion. It carries out the reaction L-tyrosyl-[protein] + ATP = O-phospho-L-tyrosyl-[protein] + ADP + H(+). With respect to regulation, binding of a cognate ligand leads to dimerization and activation by autophosphorylation on tyrosine residues. In vitro kinase activity is increased by Mg(2+). Inhibited by PD153035, lapatinib, gefitinib (iressa, ZD1839), AG1478 and BIBX1382BS. Functionally, tyrosine-protein kinase that plays an essential role as cell surface receptor for neuregulins and EGF family members and regulates development of the heart, the central nervous system and the mammary gland, gene transcription, cell proliferation, differentiation, migration and apoptosis. Required for normal cardiac muscle differentiation during embryonic development, and for postnatal cardiomyocyte proliferation. Required for normal development of the embryonic central nervous system, especially for normal neural crest cell migration and normal axon guidance. Required for mammary gland differentiation, induction of milk proteins and lactation. Acts as cell-surface receptor for the neuregulins NRG1, NRG2, NRG3 and NRG4 and the EGF family members BTC, EREG and HBEGF. Ligand binding triggers receptor dimerization and autophosphorylation at specific tyrosine residues that then serve as binding sites for scaffold proteins and effectors. Ligand specificity and signaling is modulated by alternative splicing, proteolytic processing, and by the formation of heterodimers with other ERBB family members, thereby creating multiple combinations of intracellular phosphotyrosines that trigger ligand- and context-specific cellular responses. Mediates phosphorylation of SHC1 and activation of the MAP kinases MAPK1/ERK2 and MAPK3/ERK1. Isoform JM-A CYT-1 and isoform JM-B CYT-1 phosphorylate PIK3R1, leading to the activation of phosphatidylinositol 3-kinase and AKT1 and protect cells against apoptosis. Isoform JM-A CYT-1 and isoform JM-B CYT-1 mediate reorganization of the actin cytoskeleton and promote cell migration in response to NRG1. Isoform JM-A CYT-2 and isoform JM-B CYT-2 lack the phosphotyrosine that mediates interaction with PIK3R1, and hence do not phosphorylate PIK3R1, do not protect cells against apoptosis, and do not promote reorganization of the actin cytoskeleton and cell migration. Proteolytic processing of isoform JM-A CYT-1 and isoform JM-A CYT-2 gives rise to the corresponding soluble intracellular domains (4ICD) that translocate to the nucleus, promote nuclear import of STAT5A, activation of STAT5A, mammary epithelium differentiation, cell proliferation and activation of gene expression. The ERBB4 soluble intracellular domains (4ICD) colocalize with STAT5A at the CSN2 promoter to regulate transcription of milk proteins during lactation. The ERBB4 soluble intracellular domains can also translocate to mitochondria and promote apoptosis. The chain is Receptor tyrosine-protein kinase erbB-4 (ERBB4) from Homo sapiens (Human).